The primary structure comprises 707 residues: Molybdenum cofactor sulfurase (707 aa).

Residue lysine 206 is modified to N6-(pyridoxal phosphate)lysine. Residue cysteine 365 is part of the active site. The region spanning 558–705 (QWLENALDMT…VEAGSAVRFF (148 aa)) is the MOSC domain.

Belongs to the class-V pyridoxal-phosphate-dependent aminotransferase family. MOCOS subfamily. It depends on pyridoxal 5'-phosphate as a cofactor.

The catalysed reaction is Mo-molybdopterin + L-cysteine + AH2 = thio-Mo-molybdopterin + L-alanine + A + H2O. It participates in cofactor biosynthesis; molybdopterin biosynthesis. Functionally, sulfurates the molybdenum cofactor. Sulfation of molybdenum is essential for xanthine dehydrogenase (XDH) and aldehyde oxidase (ADO) enzymes in which molybdenum cofactor is liganded by 1 oxygen and 1 sulfur atom in active form. The polypeptide is Molybdenum cofactor sulfurase (mocs-1) (Caenorhabditis briggsae).